The primary structure comprises 883 residues: Phosphoenolpyruvate carboxylase (883 aa).

Active-site residues include His-138 and Lys-546.

This sequence belongs to the PEPCase type 1 family. Mg(2+) serves as cofactor.

It catalyses the reaction oxaloacetate + phosphate = phosphoenolpyruvate + hydrogencarbonate. Functionally, forms oxaloacetate, a four-carbon dicarboxylic acid source for the tricarboxylic acid cycle. The polypeptide is Phosphoenolpyruvate carboxylase (Escherichia coli O45:K1 (strain S88 / ExPEC)).